The following is a 253-amino-acid chain: Ubiquinone biosynthesis O-methyltransferase (253 aa).

Arg-45, Gly-76, Asp-97, and Met-140 together coordinate S-adenosyl-L-methionine.

This sequence belongs to the methyltransferase superfamily. UbiG/COQ3 family.

It catalyses the reaction a 3-demethylubiquinol + S-adenosyl-L-methionine = a ubiquinol + S-adenosyl-L-homocysteine + H(+). The enzyme catalyses a 3-(all-trans-polyprenyl)benzene-1,2-diol + S-adenosyl-L-methionine = a 2-methoxy-6-(all-trans-polyprenyl)phenol + S-adenosyl-L-homocysteine + H(+). It participates in cofactor biosynthesis; ubiquinone biosynthesis. Functionally, O-methyltransferase that catalyzes the 2 O-methylation steps in the ubiquinone biosynthetic pathway. In Parvibaculum lavamentivorans (strain DS-1 / DSM 13023 / NCIMB 13966), this protein is Ubiquinone biosynthesis O-methyltransferase.